The following is a 465-amino-acid chain: Protein hedgehog (465 aa).

Cysteine 79 is lipidated: N-palmitoyl cysteine. Ca(2+) is bound by residues glutamate 143, glutamate 144, aspartate 149, threonine 179, glutamate 180, aspartate 183, and aspartate 185. The Cholesterol glycine ester moiety is linked to residue glycine 251.

The protein belongs to the hedgehog family. As to quaternary structure, interacts with shf. In terms of processing, the C-terminal part of the hedgehog protein precursor displays an autoproteolysis activity that results in the cleavage of the full-length protein into two parts (N-product and C-product). In addition, the C-terminal part displays a cholesterol transferase activity that results by the covalent attachment of a cholesterol moiety to the C-terminal of the newly generated N-product. The N-product is the active species in both local and long-range signaling, whereas the C-product has no signaling activity. Post-translationally, cholesterylation is required for N-product targeting to lipid rafts and multimerization. N-palmitoylation by Rasp of the hedgehog N-product, within the secretory pathway, is required for the embryonic and larval patterning activities of the hedgehog signal.

It is found in the nucleus. The protein resides in the cytoplasm. The protein localises to the cell membrane. It catalyses the reaction glycyl-L-cysteinyl-[protein] + cholesterol + H(+) = [protein]-C-terminal glycyl cholesterol ester + N-terminal L-cysteinyl-[protein]. In terms of biological role, the C-terminal part of the hedgehog protein precursor displays an autoproteolysis activity that results in the cleavage of the full-length protein into two parts (N-product and C-product). In addition, the C-terminal part displays a cholesterol transferase activity that results by the covalent attachment of a cholesterol moiety to the C-terminal of the newly generated N-product. Once cleaved, the C-product has no signaling activity and diffuses from the cell. Functionally, the dually lipidated hedgehog protein N-product is a morphogen which is essential for a variety of patterning events during development. Establishes the anterior-posterior axis of the embryonic segments and patterns the larval imaginal disks. Binds to the patched (ptc) receptor, which functions in association with smoothened (smo), to activate the transcription of target genes wingless (wg), decapentaplegic (dpp) and ptc. In the absence of hh, ptc represses the constitutive signaling activity of smo through fused (fu). Essential component of a signaling pathway which regulates the Duox-dependent gut immune response to bacterial uracil; required to activate Cad99C-dependent endosome formation, norpA-dependent Ca2+ mobilization and p38 MAPK, which are essential steps in the Duox-dependent production of reactive oxygen species (ROS) in response to intestinal bacterial infection. During photoreceptor differentiation, it up-regulates transcription of Ubr3, which in turn promotes the hh-signaling pathway by mediating the ubiquitination and degradation of cos. The protein is Protein hedgehog of Drosophila erecta (Fruit fly).